A 473-amino-acid polypeptide reads, in one-letter code: Photosystem II CP43 reaction center protein (473 aa).

A propeptide spanning residues 1 to 14 (MKTLYSLRRFYHVE) is cleaved from the precursor. At Thr-15 the chain carries N-acetylthreonine. Phosphothreonine is present on Thr-15. The next 5 helical transmembrane spans lie at 69-93 (LFEV…PHLA), 134-155 (LLGP…KDRN), 178-200 (KALY…RKIT), 255-275 (KPFA…LSYS), and 291-312 (WFNN…ASQA). Glu-367 is a [CaMn4O5] cluster binding site. The chain crosses the membrane as a helical span at residues 447 to 471 (RARAAAAGFEKGIDRDFEPVLSMTP).

The protein belongs to the PsbB/PsbC family. PsbC subfamily. As to quaternary structure, PSII is composed of 1 copy each of membrane proteins PsbA, PsbB, PsbC, PsbD, PsbE, PsbF, PsbH, PsbI, PsbJ, PsbK, PsbL, PsbM, PsbT, PsbX, PsbY, PsbZ, Psb30/Ycf12, at least 3 peripheral proteins of the oxygen-evolving complex and a large number of cofactors. It forms dimeric complexes. It depends on Binds multiple chlorophylls and provides some of the ligands for the Ca-4Mn-5O cluster of the oxygen-evolving complex. It may also provide a ligand for a Cl- that is required for oxygen evolution. PSII binds additional chlorophylls, carotenoids and specific lipids. as a cofactor.

It localises to the plastid. It is found in the chloroplast thylakoid membrane. One of the components of the core complex of photosystem II (PSII). It binds chlorophyll and helps catalyze the primary light-induced photochemical processes of PSII. PSII is a light-driven water:plastoquinone oxidoreductase, using light energy to abstract electrons from H(2)O, generating O(2) and a proton gradient subsequently used for ATP formation. The chain is Photosystem II CP43 reaction center protein from Phaseolus vulgaris (Kidney bean).